A 98-amino-acid polypeptide reads, in one-letter code: NADH-ubiquinone oxidoreductase chain 4L (98 aa).

3 consecutive transmembrane segments (helical) span residues 1–21 (MVLI…GVLI), 36–56 (MMLS…MFSI), and 61–81 (LILL…LVTI).

It belongs to the complex I subunit 4L family. Core subunit of respiratory chain NADH dehydrogenase (Complex I) which is composed of 45 different subunits.

The protein resides in the mitochondrion inner membrane. It carries out the reaction a ubiquinone + NADH + 5 H(+)(in) = a ubiquinol + NAD(+) + 4 H(+)(out). In terms of biological role, core subunit of the mitochondrial membrane respiratory chain NADH dehydrogenase (Complex I) which catalyzes electron transfer from NADH through the respiratory chain, using ubiquinone as an electron acceptor. Part of the enzyme membrane arm which is embedded in the lipid bilayer and involved in proton translocation. The sequence is that of NADH-ubiquinone oxidoreductase chain 4L (MT-ND4L) from Metachirus nudicaudatus (Brown four-eyed opossum).